Here is a 346-residue protein sequence, read N- to C-terminus: tRNA (guanine-N(7)-)-methyltransferase (346 aa).

Residues Gly-101 and 124–125 (EI) contribute to the S-adenosyl-L-methionine site. The tract at residues 149 to 191 (LKSAGGGGSDAAPESPAAPPTPSEAASPDSTTPSEQQAPTTLV) is disordered. The segment covering 171–182 (SEAASPDSTTPS) has biased composition (low complexity). S-adenosyl-L-methionine contacts are provided by residues 204–205 (NT) and Cys-224. Residue Asp-227 is part of the active site. 318 to 320 (TEE) provides a ligand contact to S-adenosyl-L-methionine.

Belongs to the class I-like SAM-binding methyltransferase superfamily. TrmB family. In terms of assembly, forms a complex with trm82.

It localises to the nucleus. It carries out the reaction guanosine(46) in tRNA + S-adenosyl-L-methionine = N(7)-methylguanosine(46) in tRNA + S-adenosyl-L-homocysteine. It functions in the pathway tRNA modification; N(7)-methylguanine-tRNA biosynthesis. Catalyzes the formation of N(7)-methylguanine at position 46 (m7G46) in tRNA. This chain is tRNA (guanine-N(7)-)-methyltransferase (trm8), found in Aspergillus terreus (strain NIH 2624 / FGSC A1156).